Consider the following 492-residue polypeptide: E3 ubiquitin-protein ligase XIAP (492 aa).

BIR repeat units lie at residues 40 to 105 (RLAS…KFIN), 172 to 237 (RLQT…YFVL), and 271 to 334 (RLET…KFLI). 4 residues coordinate Zn(2+): cysteine 303, cysteine 306, histidine 323, and cysteine 330. The segment at 445–480 (CKVCMDRRISIVFIPCGHLVACAVCADVLDKCPICC) adopts an RING-type zinc-finger fold.

Belongs to the IAP family. As to quaternary structure, monomer, and homodimer. Degraded in a 2-step mechanism; a caspase-independent first step and a caspase-dependent second step. Stabilized indirectly by MAPK, which acts to delay caspase activation, rather than directly phosphorylating xiap.

Its subcellular location is the cytoplasm. It carries out the reaction S-ubiquitinyl-[E2 ubiquitin-conjugating enzyme]-L-cysteine + [acceptor protein]-L-lysine = [E2 ubiquitin-conjugating enzyme]-L-cysteine + N(6)-ubiquitinyl-[acceptor protein]-L-lysine.. Multi-functional protein which regulates not only caspases and apoptosis, but also acts as an E3 ubiquitin-protein ligase mediating ubiquitination and subsequent proteasomal degradation of its target proteins. Acts as a direct caspase inhibitor. E3 ubiquitin-protein ligase that acts as an important regulator of innate immunity by mediating 'Lys-63'-linked polyubiquitination of ripk2 downstream of NOD1 and NOD2, thereby transforming ripk2 into a scaffolding protein for downstream effectors, ultimately leading to activation of the NF-kappa-B and MAP kinases signaling. A key apoptotic suppressor in eggs. Acts as a positive regulator of Wnt signaling. In Xenopus tropicalis (Western clawed frog), this protein is E3 ubiquitin-protein ligase XIAP (xiap).